A 178-amino-acid chain; its full sequence is Probable inosine/xanthosine triphosphatase (178 aa).

Belongs to the YjjX NTPase family. As to quaternary structure, homodimer. Requires Mg(2+) as cofactor. It depends on Mn(2+) as a cofactor.

It catalyses the reaction XTP + H2O = XDP + phosphate + H(+). It carries out the reaction ITP + H2O = IDP + phosphate + H(+). Phosphatase that hydrolyzes non-canonical purine nucleotides such as XTP and ITP to their respective diphosphate derivatives. Probably excludes non-canonical purines from DNA/RNA precursor pool, thus preventing their incorporation into DNA/RNA and avoiding chromosomal lesions. The polypeptide is Probable inosine/xanthosine triphosphatase (Pyrobaculum calidifontis (strain DSM 21063 / JCM 11548 / VA1)).